The sequence spans 378 residues: Forkhead box protein I1 (378 aa).

Disordered stretches follow at residues 1-26 (MSSF…QEPP) and 208-278 (DNGN…APCL). A DNA-binding region (fork-head) is located at residues 123 to 217 (RPPYSYSALI…DNGNFRRKRK (95 aa)). Over residues 236 to 248 (SSLPVDSPKTTEP) the composition is skewed to polar residues.

In terms of tissue distribution, expressed in kidney.

The protein localises to the nucleus. Its function is as follows. Transcriptional activator required for the development of normal hearing, sense of balance and kidney function. Required for the expression of SLC26A4/PDS, JAG1 and COCH in a subset of epithelial cells and the development of the endolymphatic system in the inner ear. Also required for the expression of SLC4A1/AE1, SLC4A9/AE4, ATP6V1B1 and the differentiation of intercalated cells in the epithelium of distal renal tubules. This chain is Forkhead box protein I1 (FOXI1), found in Homo sapiens (Human).